The sequence spans 442 residues: 2-oxoisovalerate dehydrogenase subunit alpha, mitochondrial (442 aa).

A mitochondrion-targeting transit peptide spans 1–42; that stretch reads MSAAKIWRPSRGLRQAALLLLGRSGVRGLARSHPSRQQQQQF. A disordered region spans residues 30–50; it reads ARSHPSRQQQQQFPSLDDKPQ. The thiamine diphosphate site is built by Tyr155 and Arg156. Ser203 provides a ligand contact to K(+). Ser204 contributes to the thiamine diphosphate binding site. The K(+) site is built by Pro205, Thr208, and Gln209. Position 235 (Glu235) interacts with Mg(2+). 3 residues coordinate thiamine diphosphate: Gly236, Ala237, and Arg262. Mg(2+) contacts are provided by Asn264 and Tyr266. His333 contacts thiamine diphosphate. Ser334 carries the phosphoserine; by BCKDK modification. Thr335 is subject to Phosphothreonine. Phosphoserine is present on residues Ser336 and Ser344. The residue at position 353 (Lys353) is an N6-acetyllysine; alternate. Lys353 bears the N6-succinyllysine; alternate mark. Residue Lys377 is modified to N6-succinyllysine.

The protein belongs to the BCKDHA family. In terms of assembly, heterotetramer of 2 alpha/BCKDHA and 2 beta chains/BCKDHB that forms the branched-chain alpha-keto acid decarboxylase (E1) component of the BCKD complex. The branched-chain alpha-ketoacid dehydrogenase is a large complex composed of three major building blocks E1, E2 and E3. It is organized around E2, a 24-meric cubic core composed of DBT, to which are associated 6 to 12 copies of E1, and approximately 6 copies of the dehydrogenase E3, a DLD dimer. Interacts with PPM1K. Requires thiamine diphosphate as cofactor. Mg(2+) is required as a cofactor. Phosphorylated at Ser-334 by BCKDK and dephosphorylated by protein phosphatase PPM1K.

Its subcellular location is the mitochondrion matrix. The catalysed reaction is N(6)-[(R)-lipoyl]-L-lysyl-[protein] + 3-methyl-2-oxobutanoate + H(+) = N(6)-[(R)-S(8)-2-methylpropanoyldihydrolipoyl]-L-lysyl-[protein] + CO2. Its function is as follows. Together with BCKDHB forms the heterotetrameric E1 subunit of the mitochondrial branched-chain alpha-ketoacid dehydrogenase (BCKD) complex. The BCKD complex catalyzes the multi-step oxidative decarboxylation of alpha-ketoacids derived from the branched-chain amino-acids valine, leucine and isoleucine producing CO2 and acyl-CoA which is subsequently utilized to produce energy. The E1 subunit catalyzes the first step with the decarboxylation of the alpha-ketoacid forming an enzyme-product intermediate. A reductive acylation mediated by the lipoylamide cofactor of E2 extracts the acyl group from the E1 active site for the next step of the reaction. The chain is 2-oxoisovalerate dehydrogenase subunit alpha, mitochondrial from Mus musculus (Mouse).